Here is a 445-residue protein sequence, read N- to C-terminus: tRNA-2-methylthio-N(6)-dimethylallyladenosine synthase (445 aa).

The region spanning 7–121 is the MTTase N-terminal domain; sequence KTFYIETFGC…LPEMLVQLEA (115 aa). Residues Cys16, Cys52, Cys84, Cys158, Cys162, and Cys165 each contribute to the [4Fe-4S] cluster site. The 231-residue stretch at 144-374 folds into the Radical SAM core domain; the sequence is RDNPHRAYLT…QEKQRAIQIR (231 aa). Residues 377-443 enclose the TRAM domain; the sequence is AEMIGSIQEV…PNSLVGESAA (67 aa).

It belongs to the methylthiotransferase family. MiaB subfamily. In terms of assembly, monomer. [4Fe-4S] cluster is required as a cofactor.

The protein localises to the cytoplasm. It catalyses the reaction N(6)-dimethylallyladenosine(37) in tRNA + (sulfur carrier)-SH + AH2 + 2 S-adenosyl-L-methionine = 2-methylsulfanyl-N(6)-dimethylallyladenosine(37) in tRNA + (sulfur carrier)-H + 5'-deoxyadenosine + L-methionine + A + S-adenosyl-L-homocysteine + 2 H(+). In terms of biological role, catalyzes the methylthiolation of N6-(dimethylallyl)adenosine (i(6)A), leading to the formation of 2-methylthio-N6-(dimethylallyl)adenosine (ms(2)i(6)A) at position 37 in tRNAs that read codons beginning with uridine. The protein is tRNA-2-methylthio-N(6)-dimethylallyladenosine synthase of Solibacter usitatus (strain Ellin6076).